A 314-amino-acid chain; its full sequence is Methionyl-tRNA formyltransferase (314 aa).

110-113 (SLLP) is a binding site for (6S)-5,6,7,8-tetrahydrofolate.

It belongs to the Fmt family.

The catalysed reaction is L-methionyl-tRNA(fMet) + (6R)-10-formyltetrahydrofolate = N-formyl-L-methionyl-tRNA(fMet) + (6S)-5,6,7,8-tetrahydrofolate + H(+). Functionally, attaches a formyl group to the free amino group of methionyl-tRNA(fMet). The formyl group appears to play a dual role in the initiator identity of N-formylmethionyl-tRNA by promoting its recognition by IF2 and preventing the misappropriation of this tRNA by the elongation apparatus. The chain is Methionyl-tRNA formyltransferase from Bacillus cytotoxicus (strain DSM 22905 / CIP 110041 / 391-98 / NVH 391-98).